The sequence spans 729 residues: Fatty acid oxidation complex subunit alpha (729 aa).

The enoyl-CoA hydratase/isomerase stretch occupies residues 1–189 (MLYKGDTLYV…KIGLIDGIVK (189 aa)). Substrate is bound at residue Asp-296. Residues 311 to 729 (EMPKQAAVLG…ARPVGALKTA (419 aa)) are 3-hydroxyacyl-CoA dehydrogenase. NAD(+)-binding positions include Met-324, Asp-343, 400-402 (VVE), Lys-407, and Ser-429. Catalysis depends on His-450, which acts as the For 3-hydroxyacyl-CoA dehydrogenase activity. An NAD(+)-binding site is contributed by Asn-453. Residues Asn-500 and Tyr-660 each coordinate substrate. Positions 708–729 (RHNEPYYPPVEPARPVGALKTA) are disordered.

This sequence in the N-terminal section; belongs to the enoyl-CoA hydratase/isomerase family. It in the C-terminal section; belongs to the 3-hydroxyacyl-CoA dehydrogenase family. As to quaternary structure, heterotetramer of two alpha chains (FadB) and two beta chains (FadA).

The enzyme catalyses a (3S)-3-hydroxyacyl-CoA + NAD(+) = a 3-oxoacyl-CoA + NADH + H(+). The catalysed reaction is a (3S)-3-hydroxyacyl-CoA = a (2E)-enoyl-CoA + H2O. It carries out the reaction a 4-saturated-(3S)-3-hydroxyacyl-CoA = a (3E)-enoyl-CoA + H2O. It catalyses the reaction (3S)-3-hydroxybutanoyl-CoA = (3R)-3-hydroxybutanoyl-CoA. The enzyme catalyses a (3Z)-enoyl-CoA = a 4-saturated (2E)-enoyl-CoA. The catalysed reaction is a (3E)-enoyl-CoA = a 4-saturated (2E)-enoyl-CoA. Its pathway is lipid metabolism; fatty acid beta-oxidation. In terms of biological role, involved in the aerobic and anaerobic degradation of long-chain fatty acids via beta-oxidation cycle. Catalyzes the formation of 3-oxoacyl-CoA from enoyl-CoA via L-3-hydroxyacyl-CoA. It can also use D-3-hydroxyacyl-CoA and cis-3-enoyl-CoA as substrate. The protein is Fatty acid oxidation complex subunit alpha of Enterobacter sp. (strain 638).